The sequence spans 80 residues: Small, acid-soluble spore protein Tlp (80 aa).

Belongs to the Tlp family.

The protein localises to the spore core. The chain is Small, acid-soluble spore protein Tlp from Bacillus pumilus (strain SAFR-032).